A 147-amino-acid chain; its full sequence is Large ribosomal subunit protein uL13 (147 aa).

Belongs to the universal ribosomal protein uL13 family. Part of the 50S ribosomal subunit.

Functionally, this protein is one of the early assembly proteins of the 50S ribosomal subunit, although it is not seen to bind rRNA by itself. It is important during the early stages of 50S assembly. This chain is Large ribosomal subunit protein uL13, found in Mycolicibacterium paratuberculosis (strain ATCC BAA-968 / K-10) (Mycobacterium paratuberculosis).